Consider the following 187-residue polypeptide: Ethylene-responsive transcription factor ERF015 (187 aa).

A DNA-binding region (AP2/ERF) is located at residues 26 to 83 (CYRGVRKRSWGKWVSEIRVPKTGRRIWLGSYDAPEKAARAYDAALFCIRGEKGVYNFP).

It belongs to the AP2/ERF transcription factor family. ERF subfamily.

The protein localises to the nucleus. Functionally, probably acts as a transcriptional activator. Binds to the GCC-box pathogenesis-related promoter element. May be involved in the regulation of gene expression by stress factors and by components of stress signal transduction pathways. The polypeptide is Ethylene-responsive transcription factor ERF015 (ERF015) (Arabidopsis thaliana (Mouse-ear cress)).